A 283-amino-acid chain; its full sequence is MQHNLIAFLSDVGSADEAHALCKGVMYGVAPAATIVDITHDVAPFDVREGALFLADVPHSFPAHTVICAYVYPETGTATHTIAVRNEKGQLLVGPNNGLLSFALDASPAVECHEVLSPDVMNQPVTPTWYGKDIVAACAAHLAAGTDLAAVGPRIDPKQIVRLPYASASEVEGGIRGEVVRIDRAFGNVWTNIPTHLIGSMLQDGERLEVKIEALSDTVLELPFCKTFGEVDEGQPLLYLNSRGRLALGLNQSNFIEKWPVVPGDSITVSPRVPDSNLGPVLG.

Residues D11, 70–72 (YVY), and 128–131 (TWYG) contribute to the substrate site. G131 lines the chloride pocket.

Belongs to the SAM hydrolase / SAM-dependent halogenase family. As to quaternary structure, homotrimer.

The catalysed reaction is chloride + S-adenosyl-L-methionine = 5'-chloro-5'-deoxyadenosine + L-methionine. Functionally, involved in the biosynthesis of the proteosome inhibitor salinosporamide A (SalA). Catalyzes the halogenation of S-adenosyl-L-methionine (SAM) with chloride to generate 5'-chloro-5'-deoxyadenosine (5'-CIDA) and L-methionine. It can also use bromide and iodide, producing halogenated 5'-deoxyadenosine (5'-XDA) and L-methionine, however no halogenase activity is detected in the presence of fluoride. In Salinispora tropica (strain ATCC BAA-916 / DSM 44818 / JCM 13857 / NBRC 105044 / CNB-440), this protein is Adenosyl-chloride synthase.